A 183-amino-acid chain; its full sequence is Ribosome-recycling factor (183 aa).

Belongs to the RRF family.

Its subcellular location is the cytoplasm. Functionally, responsible for the release of ribosomes from messenger RNA at the termination of protein biosynthesis. May increase the efficiency of translation by recycling ribosomes from one round of translation to another. In Bifidobacterium longum (strain DJO10A), this protein is Ribosome-recycling factor.